Here is a 187-residue protein sequence, read N- to C-terminus: Segregation and condensation protein B (187 aa).

Belongs to the ScpB family. In terms of assembly, homodimer. Homodimerization may be required to stabilize the binding of ScpA to the Smc head domains. Component of a cohesin-like complex composed of ScpA, ScpB and the Smc homodimer, in which ScpA and ScpB bind to the head domain of Smc. The presence of the three proteins is required for the association of the complex with DNA.

The protein resides in the cytoplasm. Functionally, participates in chromosomal partition during cell division. May act via the formation of a condensin-like complex containing Smc and ScpA that pull DNA away from mid-cell into both cell halves. This chain is Segregation and condensation protein B, found in Agathobacter rectalis (strain ATCC 33656 / DSM 3377 / JCM 17463 / KCTC 5835 / VPI 0990) (Eubacterium rectale).